We begin with the raw amino-acid sequence, 582 residues long: 2-succinyl-5-enolpyruvyl-6-hydroxy-3-cyclohexene-1-carboxylate synthase (582 aa).

This sequence belongs to the TPP enzyme family. MenD subfamily. Homodimer. Mg(2+) serves as cofactor. Requires Mn(2+) as cofactor. It depends on thiamine diphosphate as a cofactor.

It catalyses the reaction isochorismate + 2-oxoglutarate + H(+) = 5-enolpyruvoyl-6-hydroxy-2-succinyl-cyclohex-3-ene-1-carboxylate + CO2. It participates in quinol/quinone metabolism; 1,4-dihydroxy-2-naphthoate biosynthesis; 1,4-dihydroxy-2-naphthoate from chorismate: step 2/7. It functions in the pathway cofactor biosynthesis; phylloquinone biosynthesis. In terms of biological role, catalyzes the thiamine diphosphate-dependent decarboxylation of 2-oxoglutarate and the subsequent addition of the resulting succinic semialdehyde-thiamine pyrophosphate anion to isochorismate to yield 2-succinyl-5-enolpyruvyl-6-hydroxy-3-cyclohexene-1-carboxylate (SEPHCHC). This Synechococcus elongatus (strain ATCC 33912 / PCC 7942 / FACHB-805) (Anacystis nidulans R2) protein is 2-succinyl-5-enolpyruvyl-6-hydroxy-3-cyclohexene-1-carboxylate synthase.